Here is a 494-residue protein sequence, read N- to C-terminus: Cytochrome P450 2A5 (494 aa).

The residue at position 131 (serine 131) is a Phosphoserine. N6-acetyllysine is present on lysine 379. Residue cysteine 439 coordinates heme.

It belongs to the cytochrome P450 family. The cofactor is heme. In terms of tissue distribution, liver, with a strong circadian rhythmicity. Circadian expression is regulated by DBP.

The protein localises to the endoplasmic reticulum membrane. It localises to the microsome membrane. The catalysed reaction is an organic molecule + reduced [NADPH--hemoprotein reductase] + O2 = an alcohol + oxidized [NADPH--hemoprotein reductase] + H2O + H(+). In terms of biological role, exhibits a high coumarin 7-hydroxylase activity. This chain is Cytochrome P450 2A5 (Cyp2a5), found in Mus musculus (Mouse).